The primary structure comprises 56 residues: Small ribosomal subunit protein uS14 (56 aa).

The Zn(2+) site is built by Cys21, Cys24, Cys39, and Cys42.

The protein belongs to the universal ribosomal protein uS14 family. Zn(2+) is required as a cofactor.

This is Small ribosomal subunit protein uS14 (RPS29) from Candida glabrata (strain ATCC 2001 / BCRC 20586 / JCM 3761 / NBRC 0622 / NRRL Y-65 / CBS 138) (Yeast).